We begin with the raw amino-acid sequence, 346 residues long: Ribosomal RNA small subunit methyltransferase H (346 aa).

Residues 47 to 49 (GGY), Asp-65, Phe-92, Asp-113, and Gln-120 contribute to the S-adenosyl-L-methionine site. Residues 294–346 (AVEPGSDEVAGNPRARSAKLRAAERTDAPAHPDGDLAGLLPADLSQRRGRRRS) form a disordered region. A compositionally biased stretch (basic and acidic residues) spans 314 to 327 (RAAERTDAPAHPDG). Positions 328 to 337 (DLAGLLPADL) are enriched in low complexity.

The protein belongs to the methyltransferase superfamily. RsmH family.

The protein resides in the cytoplasm. The enzyme catalyses cytidine(1402) in 16S rRNA + S-adenosyl-L-methionine = N(4)-methylcytidine(1402) in 16S rRNA + S-adenosyl-L-homocysteine + H(+). Functionally, specifically methylates the N4 position of cytidine in position 1402 (C1402) of 16S rRNA. This is Ribosomal RNA small subunit methyltransferase H from Azorhizobium caulinodans (strain ATCC 43989 / DSM 5975 / JCM 20966 / LMG 6465 / NBRC 14845 / NCIMB 13405 / ORS 571).